We begin with the raw amino-acid sequence, 332 residues long: L-lactate dehydrogenase A chain (332 aa).

Ala2 is subject to N-acetylalanine. Lys5 is modified (N6-acetyllysine; alternate). Lys5 carries the N6-succinyllysine; alternate modification. Lys14 carries the post-translational modification N6-acetyllysine. Position 29–57 (29–57 (GAVGMACAISILMKDLADELALVDVMEDK)) interacts with NAD(+). Residue Lys57 is modified to N6-acetyllysine; alternate. Lys57 is covalently cross-linked (Glycyl lysine isopeptide (Lys-Gly) (interchain with G-Cter in SUMO2); alternate). Lys81 bears the N6-acetyllysine mark. Residue Arg99 coordinates NAD(+). Arg106 is a substrate binding site. Lys118 carries the N6-acetyllysine; alternate modification. N6-succinyllysine; alternate is present on Lys118. An N6-acetyllysine modification is found at Lys126. Asn138 contributes to the NAD(+) binding site. Residues Asn138 and Arg169 each coordinate substrate. Catalysis depends on His193, which acts as the Proton acceptor. N6-acetyllysine is present on residues Lys224 and Lys232. At Tyr239 the chain carries Phosphotyrosine. N6-acetyllysine is present on Lys243. Thr248 serves as a coordination point for substrate. Phosphothreonine is present on Thr309. Lys318 is modified (N6-acetyllysine; alternate). At Lys318 the chain carries N6-succinyllysine; alternate. Thr322 is modified (phosphothreonine).

This sequence belongs to the LDH/MDH superfamily. LDH family. Homotetramer. Interacts with PTEN upstream reading frame protein MP31. In terms of processing, ISGylated.

The protein resides in the cytoplasm. The catalysed reaction is (S)-lactate + NAD(+) = pyruvate + NADH + H(+). It functions in the pathway fermentation; pyruvate fermentation to lactate; (S)-lactate from pyruvate: step 1/1. In terms of biological role, interconverts simultaneously and stereospecifically pyruvate and lactate with concomitant interconversion of NADH and NAD(+). The polypeptide is L-lactate dehydrogenase A chain (Ldha) (Mus musculus (Mouse)).